Reading from the N-terminus, the 449-residue chain is Tubulin beta chain (449 aa).

Residues Gln-11, Glu-71, Ser-140, Gly-144, Thr-145, Gly-146, Asn-206, and Asn-228 each coordinate GTP. Glu-71 contacts Mg(2+).

It belongs to the tubulin family. As to quaternary structure, dimer of alpha and beta chains. A typical microtubule is a hollow water-filled tube with an outer diameter of 25 nm and an inner diameter of 15 nM. Alpha-beta heterodimers associate head-to-tail to form protofilaments running lengthwise along the microtubule wall with the beta-tubulin subunit facing the microtubule plus end conferring a structural polarity. Microtubules usually have 13 protofilaments but different protofilament numbers can be found in some organisms and specialized cells. Requires Mg(2+) as cofactor.

The protein resides in the cytoplasm. It is found in the cytoskeleton. Its function is as follows. Tubulin is the major constituent of microtubules, a cylinder consisting of laterally associated linear protofilaments composed of alpha- and beta-tubulin heterodimers. Microtubules grow by the addition of GTP-tubulin dimers to the microtubule end, where a stabilizing cap forms. Below the cap, tubulin dimers are in GDP-bound state, owing to GTPase activity of alpha-tubulin. In Cicer arietinum (Chickpea), this protein is Tubulin beta chain (TUBB).